We begin with the raw amino-acid sequence, 464 residues long: Protein FAM90A10 (464 aa).

Disordered regions lie at residues 1–42, 69–373, and 415–437; these read MMAR…DPRL, VPAT…LPTA, and HSPE…SEAP. Composition is skewed to basic and acidic residues over residues 74 to 89 and 97 to 114; these read GKKE…KPRG and NKDK…DPQR. Low complexity predominate over residues 180–197; sequence LASLSPLRKASLSSSSSL.

The protein belongs to the FAM90 family.

In Homo sapiens (Human), this protein is Protein FAM90A10 (FAM90A10).